Reading from the N-terminus, the 166-residue chain is UPF0304 protein VP0990 (166 aa).

This sequence belongs to the UPF0304 family.

This is UPF0304 protein VP0990 from Vibrio parahaemolyticus serotype O3:K6 (strain RIMD 2210633).